The following is a 40-amino-acid chain: Snaclec tokaracetin subunit alpha (40 aa).

The 40-residue stretch at 1-40 (DCPSGWSSFKQYCYKPFKQLKTWEDAERFCLEQVKGAHLV) folds into the C-type lectin domain. Cysteine 2 and cysteine 13 are oxidised to a cystine.

This sequence belongs to the snaclec family. Heterodimer of subunits alpha and beta; disulfide-linked. As to expression, expressed by the venom gland.

Its subcellular location is the secreted. Its function is as follows. Platelet antagonist that specifically and reversibly binds to a site on platelet glycoprotein Ibalpha (GP1BA) close to or identical with the site for vWF binding. It inhibits the binding of vWF to platelets and vWF-dependent shear-induced platelet aggregation. The sequence is that of Snaclec tokaracetin subunit alpha from Protobothrops tokarensis (Tokara habu).